The following is a 98-amino-acid chain: NADH-ubiquinone oxidoreductase chain 4L (98 aa).

The next 3 helical transmembrane spans lie at 1–21 (MSIV…GMLI), 29–49 (SLLC…LIIL), and 61–81 (IILL…LVMV).

The protein belongs to the complex I subunit 4L family. In terms of assembly, core subunit of respiratory chain NADH dehydrogenase (Complex I) which is composed of 45 different subunits.

It localises to the mitochondrion inner membrane. It catalyses the reaction a ubiquinone + NADH + 5 H(+)(in) = a ubiquinol + NAD(+) + 4 H(+)(out). Core subunit of the mitochondrial membrane respiratory chain NADH dehydrogenase (Complex I) which catalyzes electron transfer from NADH through the respiratory chain, using ubiquinone as an electron acceptor. Part of the enzyme membrane arm which is embedded in the lipid bilayer and involved in proton translocation. The chain is NADH-ubiquinone oxidoreductase chain 4L (MT-ND4L) from Herpestes javanicus (Small Indian mongoose).